A 170-amino-acid chain; its full sequence is Ribosome maturation factor RimM (170 aa).

Residues 92 to 163 (KEGWYYFELE…RMDVELPPGL (72 aa)) enclose the PRC barrel domain.

This sequence belongs to the RimM family. In terms of assembly, binds ribosomal protein uS19.

The protein localises to the cytoplasm. In terms of biological role, an accessory protein needed during the final step in the assembly of 30S ribosomal subunit, possibly for assembly of the head region. Essential for efficient processing of 16S rRNA. May be needed both before and after RbfA during the maturation of 16S rRNA. It has affinity for free ribosomal 30S subunits but not for 70S ribosomes. This chain is Ribosome maturation factor RimM, found in Desulfitobacterium hafniense (strain Y51).